A 381-amino-acid chain; its full sequence is Transcription termination factor 4, mitochondrial (381 aa).

A mitochondrion-targeting transit peptide spans 1 to 42; the sequence is MAAFGRQVLDWHRLIPLTWACMARQTPHLGEQRRTTASLLRK. MTERF repeat units lie at residues 142–172, 177–204, 209–239, 245–270, and 290–318; these read CVVLKKSPQLLKLPIMQMRKRSSYLQKLGLG, KRVLYCCPEIFTMRQQDINDTVRLLKEK, VQQVTKILHSCPSVLREDLGQLEYKFQYAYF, HPDIVKSEYLQYSLTKIKQRHIYLER, and LKDILRVSEAEFLARTACTSVEEFQVFKK. Positions 310 to 327 are dimerization with NSUN4; that stretch reads VEEFQVFKKLLAREEEES. The segment at 322–381 is disordered; it reads REEEESESSTSDDKRASLDEDEDDDDEEDNDEDDNDEDDDDEDDDEAEDNDEDEDDDEEE. Over residues 340–381 the composition is skewed to acidic residues; it reads DEDEDDDDEEDNDEDDNDEDDDDEDDDEAEDNDEDEDDDEEE.

The protein belongs to the mTERF family. Heterodimer with NSUN4; this interaction may be required for NSUN4 recruitment to the mitochondrial large ribosomal subunit. Post-translationally, the mature mitochondrial protein exists in 2 forms differing at the level of their N-terminus, one is starting at residue 43 and the other at residue 48.

It is found in the mitochondrion. Functionally, regulator of mitochondrial ribosome biogenesis and translation. Binds to mitochondrial ribosomal RNAs 16S, 12S and 7S and targets NSUN4 RNA methyltransferase to the mitochondrial large ribosomal subunit (39S). The polypeptide is Transcription termination factor 4, mitochondrial (MTERF4) (Homo sapiens (Human)).